Here is a 1436-residue protein sequence, read N- to C-terminus: Gag-Pol polyprotein (1436 aa).

The N-myristoyl glycine; by host moiety is linked to residue Gly2. The interval 7-31 (VLSGGKLDAWEKIRLRPGGKKKYRL) is interaction with Gp41. Residues 8 to 43 (LSGGKLDAWEKIRLRPGGKKKYRLKHLVWASRELER) are interaction with host CALM1. Positions 12-19 (KLDAWEKI) are interaction with host AP3D1. An interaction with membrane phosphatidylinositol 4,5-bisphosphate and RNA region spans residues 14 to 33 (DAWEKIRLRPGGKKKYRLKH). The Nuclear export signal motif lies at 16-22 (WEKIRLR). Residues 26–32 (KKKYRLK) carry the Nuclear localization signal motif. Residues 73-77 (EELRS) form an interaction with membrane phosphatidylinositol 4,5-bisphosphate region. Residues 102–129 (EKMEEEQNKSKNKKAQQAAADAGNNSQV) are disordered. Residues 116–128 (AQQAAADAGNNSQ) show a composition bias toward low complexity. Phosphotyrosine; by host is present on Tyr133. The segment at 190–228 (NTVGGHQAAMQMLKETINEEAAEWDRLHPVHAGPIAPGQ) is interaction with human PPIA/CYPA and NUP153. A dimerization/Multimerization of capsid protein p24 region spans residues 278–364 (YSPVSILDIR…GGPSHKARVL (87 aa)). CCHC-type zinc fingers lie at residues 392-409 (IKCF…NCRA) and 413-430 (KGCW…DCTE). The interval 490–494 (PQITL) is dimerization of protease. A Peptidase A2 domain is found at 509-578 (KEALLDTGAD…TPVNIIGRNL (70 aa)). Residue Asp514 is the For protease activity; shared with dimeric partner of the active site. Dimerization of protease regions lie at residues 538 to 544 (GIGGFIK) and 577 to 589 (NLLT…LNFP). The 191-residue stretch at 632–822 (EGKISRVGPE…PPFLWMGYEL (191 aa)) folds into the Reverse transcriptase domain. Positions 698, 773, and 774 each coordinate Mg(2+). The segment at 815 to 823 (FLWMGYELH) is RT 'primer grip'. The Tryptophan repeat motif motif lies at 986-1002 (WETWWVEYWQATWIPEW). The 124-residue stretch at 1022 to 1145 (IIGAETFYVD…VDKLVSQGIR (124 aa)) folds into the RNase H type-1 domain. Positions 1031, 1066, 1086, and 1137 each coordinate Mg(2+). The Integrase-type zinc finger occupies 1151–1192 (DGIDKAQEEHEKYHNNWRAMASDFNLPPVVAKEIVASCDKCQ). 4 residues coordinate Zn(2+): His1160, His1164, Cys1188, and Cys1191. One can recognise an Integrase catalytic domain in the interval 1202–1352 (VDCSPGIWQL…SAGERIIDII (151 aa)). Mg(2+) is bound by residues Asp1212, Asp1264, and Glu1300. Positions 1371–1418 (FRVYYRDSRDPIWKGPAKLLWKGEGAVVIQDNSDIKVVPRRKVKIIRD) form a DNA-binding region, integrase-type.

Homotrimer; further assembles as hexamers of trimers. Interacts with gp41 (via C-terminus). Interacts with host CALM1; this interaction induces a conformational change in the Matrix protein, triggering exposure of the myristate group. Interacts with host AP3D1; this interaction allows the polyprotein trafficking to multivesicular bodies during virus assembly. Part of the pre-integration complex (PIC) which is composed of viral genome, matrix protein, Vpr and integrase. In terms of assembly, homodimer; the homodimer further multimerizes as homohexamers or homopentamers. Interacts with human PPIA/CYPA; This interaction stabilizes the capsid. Interacts with human NUP153. Interacts with host PDZD8; this interaction stabilizes the capsid. Interacts with monkey TRIM5; this interaction destabilizes the capsid. As to quaternary structure, homodimer, whose active site consists of two apposed aspartic acid residues. Heterodimer of p66 RT and p51 RT (RT p66/p51). Heterodimerization of RT is essential for DNA polymerase activity. The overall folding of the subdomains is similar in p66 RT and p51 RT but the spatial arrangements of the subdomains are dramatically different. In terms of assembly, homotetramer; may further associate as a homohexadecamer. Part of the pre-integration complex (PIC) which is composed of viral genome, matrix protein, Vpr and integrase. Interacts with human SMARCB1/INI1 and human PSIP1/LEDGF isoform 1. Interacts with human KPNA3; this interaction might play a role in nuclear import of the pre-integration complex. Interacts with human NUP153; this interaction might play a role in nuclear import of the pre-integration complex. Requires Mg(2+) as cofactor. In terms of processing, specific enzymatic cleavages by the viral protease yield mature proteins. The protease is released by autocatalytic cleavage. The polyprotein is cleaved during and after budding, this process is termed maturation. Proteolytic cleavage of p66 RT removes the RNase H domain to yield the p51 RT subunit. Nucleocapsid protein p7 might be further cleaved after virus entry. Post-translationally, tyrosine phosphorylated presumably in the virion by a host kinase. Phosphorylation is apparently not a major regulator of membrane association. Phosphorylated possibly by host MAPK1; this phosphorylation is necessary for Pin1-mediated virion uncoating. In terms of processing, methylated by host PRMT6, impairing its function by reducing RNA annealing and the initiation of reverse transcription.

It is found in the host cell membrane. The protein localises to the host endosome. The protein resides in the host multivesicular body. It localises to the virion membrane. Its subcellular location is the host nucleus. It is found in the host cytoplasm. The protein localises to the virion. It catalyses the reaction Specific for a P1 residue that is hydrophobic, and P1' variable, but often Pro.. It carries out the reaction Endohydrolysis of RNA in RNA/DNA hybrids. Three different cleavage modes: 1. sequence-specific internal cleavage of RNA. Human immunodeficiency virus type 1 and Moloney murine leukemia virus enzymes prefer to cleave the RNA strand one nucleotide away from the RNA-DNA junction. 2. RNA 5'-end directed cleavage 13-19 nucleotides from the RNA end. 3. DNA 3'-end directed cleavage 15-20 nucleotides away from the primer terminus.. The enzyme catalyses 3'-end directed exonucleolytic cleavage of viral RNA-DNA hybrid.. The catalysed reaction is DNA(n) + a 2'-deoxyribonucleoside 5'-triphosphate = DNA(n+1) + diphosphate. With respect to regulation, protease: The viral protease is inhibited by many synthetic protease inhibitors (PIs), such as amprenavir, atazanavir, indinavir, loprinavir, nelfinavir, ritonavir and saquinavir. Use of protease inhibitors in tritherapy regimens permit more ambitious therapeutic strategies. Reverse transcriptase/ribonuclease H: RT can be inhibited either by nucleoside RT inhibitors (NRTIs) or by non nucleoside RT inhibitors (NNRTIs). NRTIs act as chain terminators, whereas NNRTIs inhibit DNA polymerization by binding a small hydrophobic pocket near the RT active site and inducing an allosteric change in this region. Classical NRTIs are abacavir, adefovir (PMEA), didanosine (ddI), lamivudine (3TC), stavudine (d4T), tenofovir (PMPA), zalcitabine (ddC), and zidovudine (AZT). Classical NNRTIs are atevirdine (BHAP U-87201E), delavirdine, efavirenz (DMP-266), emivirine (I-EBU), and nevirapine (BI-RG-587). The tritherapies used as a basic effective treatment of AIDS associate two NRTIs and one NNRTI. In terms of biological role, mediates, with Gag polyprotein, the essential events in virion assembly, including binding the plasma membrane, making the protein-protein interactions necessary to create spherical particles, recruiting the viral Env proteins, and packaging the genomic RNA via direct interactions with the RNA packaging sequence (Psi). Gag-Pol polyprotein may regulate its own translation, by the binding genomic RNA in the 5'-UTR. At low concentration, the polyprotein would promote translation, whereas at high concentration, the polyprotein would encapsidate genomic RNA and then shut off translation. Targets the polyprotein to the plasma membrane via a multipartite membrane-binding signal, that includes its myristoylated N-terminus. Matrix protein is part of the pre-integration complex. Implicated in the release from host cell mediated by Vpu. Binds to RNA. Functionally, forms the conical core that encapsulates the genomic RNA-nucleocapsid complex in the virion. Most core are conical, with only 7% tubular. The core is constituted by capsid protein hexamer subunits. The core is disassembled soon after virion entry. Host restriction factors such as TRIM5-alpha or TRIMCyp bind retroviral capsids and cause premature capsid disassembly, leading to blocks in reverse transcription. Capsid restriction by TRIM5 is one of the factors which restricts HIV-1 to the human species. Host PIN1 apparently facilitates the virion uncoating. On the other hand, interactions with PDZD8 or CYPA stabilize the capsid. Its function is as follows. Encapsulates and protects viral dimeric unspliced genomic RNA (gRNA). Binds these RNAs through its zinc fingers. Acts as a nucleic acid chaperone which is involved in rearangement of nucleic acid secondary structure during gRNA retrotranscription. Also facilitates template switch leading to recombination. As part of the polyprotein, participates in gRNA dimerization, packaging, tRNA incorporation and virion assembly. In terms of biological role, aspartyl protease that mediates proteolytic cleavages of Gag and Gag-Pol polyproteins during or shortly after the release of the virion from the plasma membrane. Cleavages take place as an ordered, step-wise cascade to yield mature proteins. This process is called maturation. Displays maximal activity during the budding process just prior to particle release from the cell. Also cleaves Nef and Vif, probably concomitantly with viral structural proteins on maturation of virus particles. Hydrolyzes host EIF4GI and PABP1 in order to shut off the capped cellular mRNA translation. The resulting inhibition of cellular protein synthesis serves to ensure maximal viral gene expression and to evade host immune response. Also mediates cleavage of host YTHDF3. Mediates cleavage of host CARD8, thereby activating the CARD8 inflammasome, leading to the clearance of latent HIV-1 in patient CD4(+) T-cells after viral reactivation; in contrast, HIV-1 can evade CARD8-sensing when its protease remains inactive in infected cells prior to viral budding. Multifunctional enzyme that converts the viral RNA genome into dsDNA in the cytoplasm, shortly after virus entry into the cell. This enzyme displays a DNA polymerase activity that can copy either DNA or RNA templates, and a ribonuclease H (RNase H) activity that cleaves the RNA strand of RNA-DNA heteroduplexes in a partially processive 3' to 5' endonucleasic mode. Conversion of viral genomic RNA into dsDNA requires many steps. A tRNA(3)-Lys binds to the primer-binding site (PBS) situated at the 5'-end of the viral RNA. RT uses the 3' end of the tRNA primer to perform a short round of RNA-dependent minus-strand DNA synthesis. The reading proceeds through the U5 region and ends after the repeated (R) region which is present at both ends of viral RNA. The portion of the RNA-DNA heteroduplex is digested by the RNase H, resulting in a ssDNA product attached to the tRNA primer. This ssDNA/tRNA hybridizes with the identical R region situated at the 3' end of viral RNA. This template exchange, known as minus-strand DNA strong stop transfer, can be either intra- or intermolecular. RT uses the 3' end of this newly synthesized short ssDNA to perform the RNA-dependent minus-strand DNA synthesis of the whole template. RNase H digests the RNA template except for two polypurine tracts (PPTs) situated at the 5'-end and near the center of the genome. It is not clear if both polymerase and RNase H activities are simultaneous. RNase H probably can proceed both in a polymerase-dependent (RNA cut into small fragments by the same RT performing DNA synthesis) and a polymerase-independent mode (cleavage of remaining RNA fragments by free RTs). Secondly, RT performs DNA-directed plus-strand DNA synthesis using the PPTs that have not been removed by RNase H as primers. PPTs and tRNA primers are then removed by RNase H. The 3' and 5' ssDNA PBS regions hybridize to form a circular dsDNA intermediate. Strand displacement synthesis by RT to the PBS and PPT ends produces a blunt ended, linear dsDNA copy of the viral genome that includes long terminal repeats (LTRs) at both ends. Functionally, catalyzes viral DNA integration into the host chromosome, by performing a series of DNA cutting and joining reactions. This enzyme activity takes place after virion entry into a cell and reverse transcription of the RNA genome in dsDNA. The first step in the integration process is 3' processing. This step requires a complex comprising the viral genome, matrix protein, Vpr and integrase. This complex is called the pre-integration complex (PIC). The integrase protein removes 2 nucleotides from each 3' end of the viral DNA, leaving recessed CA OH's at the 3' ends. In the second step, the PIC enters cell nucleus. This process is mediated through integrase and Vpr proteins, and allows the virus to infect a non dividing cell. This ability to enter the nucleus is specific of lentiviruses, other retroviruses cannot and rely on cell division to access cell chromosomes. In the third step, termed strand transfer, the integrase protein joins the previously processed 3' ends to the 5' ends of strands of target cellular DNA at the site of integration. The 5'-ends are produced by integrase-catalyzed staggered cuts, 5 bp apart. A Y-shaped, gapped, recombination intermediate results, with the 5'-ends of the viral DNA strands and the 3' ends of target DNA strands remaining unjoined, flanking a gap of 5 bp. The last step is viral DNA integration into host chromosome. This involves host DNA repair synthesis in which the 5 bp gaps between the unjoined strands are filled in and then ligated. Since this process occurs at both cuts flanking the HIV genome, a 5 bp duplication of host DNA is produced at the ends of HIV-1 integration. Alternatively, Integrase may catalyze the excision of viral DNA just after strand transfer, this is termed disintegration. The protein is Gag-Pol polyprotein (gag-pol) of Homo sapiens (Human).